The chain runs to 905 residues: Translation initiation factor IF-2 (905 aa).

Disordered regions lie at residues Q52–V84, A116–T230, and F269–P318. The segment covering K65–V84 has biased composition (polar residues). Basic and acidic residues predominate over residues A116–Q138. A compositionally biased stretch (low complexity) spans V165–K178. Basic and acidic residues-rich tracts occupy residues P190–T230 and F269–R278. In terms of domain architecture, tr-type G spans T406–E575. Residues G415–T422 are G1. G415–T422 is a GTP binding site. The interval G440–H444 is G2. Residues D461–G464 form a G3 region. Residues D461–H465 and N515–D518 contribute to the GTP site. The G4 stretch occupies residues N515–D518. The interval S551–K553 is G5.

This sequence belongs to the TRAFAC class translation factor GTPase superfamily. Classic translation factor GTPase family. IF-2 subfamily.

The protein resides in the cytoplasm. In terms of biological role, one of the essential components for the initiation of protein synthesis. Protects formylmethionyl-tRNA from spontaneous hydrolysis and promotes its binding to the 30S ribosomal subunits. Also involved in the hydrolysis of GTP during the formation of the 70S ribosomal complex. This Psychrobacter sp. (strain PRwf-1) protein is Translation initiation factor IF-2.